A 219-amino-acid polypeptide reads, in one-letter code: Kynurenine formamidase (219 aa).

Substrate is bound at residue Trp28. Residues His58, His62, and Asp64 each contribute to the Zn(2+) site. His68 functions as the Proton donor/acceptor in the catalytic mechanism. Zn(2+) is bound by residues His170 and Glu182.

It belongs to the Cyclase 1 superfamily. KynB family. In terms of assembly, homodimer. Zn(2+) serves as cofactor.

The enzyme catalyses N-formyl-L-kynurenine + H2O = L-kynurenine + formate + H(+). The protein operates within amino-acid degradation; L-tryptophan degradation via kynurenine pathway; L-kynurenine from L-tryptophan: step 2/2. Functionally, catalyzes the hydrolysis of N-formyl-L-kynurenine to L-kynurenine, the second step in the kynurenine pathway of tryptophan degradation. This chain is Kynurenine formamidase, found in Cupriavidus pinatubonensis (strain JMP 134 / LMG 1197) (Cupriavidus necator (strain JMP 134)).